The following is a 131-amino-acid chain: Small ribosomal subunit protein uS8 (131 aa).

This sequence belongs to the universal ribosomal protein uS8 family. In terms of assembly, part of the 30S ribosomal subunit. Contacts proteins S5 and S12.

In terms of biological role, one of the primary rRNA binding proteins, it binds directly to 16S rRNA central domain where it helps coordinate assembly of the platform of the 30S subunit. The chain is Small ribosomal subunit protein uS8 from Geobacillus stearothermophilus (Bacillus stearothermophilus).